We begin with the raw amino-acid sequence, 58 residues long: Basic phospholipase A2 homolog PocTX (58 aa).

C29 and C45 are disulfide-bonded.

In terms of tissue distribution, expressed by the venom gland.

The protein resides in the secreted. In terms of biological role, wasp venom phospholipase A2 homolog that lacks enzymatic activity. This Polybia occidentalis (Paper wasp) protein is Basic phospholipase A2 homolog PocTX.